We begin with the raw amino-acid sequence, 71 residues long: Large ribosomal subunit protein bL28 (71 aa).

The protein belongs to the bacterial ribosomal protein bL28 family.

The protein is Large ribosomal subunit protein bL28 of Finegoldia magna (strain ATCC 29328 / DSM 20472 / WAL 2508) (Peptostreptococcus magnus).